The primary structure comprises 342 residues: MTSDPGSALQHRKRRHIDVCLTEAVDYQSLTTGFERYRLPYNALTQTDLHSVDLSTEFLGSHLRAPVLIGAMTGGAALSGIINRNLAAAAQQLGIGMMLGSQRVMIDDEAAAASFEVRGVAPDILLIGNIGLAQLRSSMVPGLAAALDRVGANGLAVHTNPLQEAMQHDGDTDFSGSIGRLCDVAGAIGYPVVLKEVGHGIGAAAAAELVGCPIAAIDVAGAGGTSWARIEQFVRYGDVRYPALAEWGVPTAQALTEVRQMLPDVPLVASGGIRTGMDAAKALAMGARVVAVARPLLAPAVESVEAVVDWLQRFIDELLVCLHGCGAANLSALRGRGVTELP.

Substrate is bound at residue 12–13 (RK). Residues 71–73 (AMT), Ser101, and Asn129 each bind FMN. 101–103 (SQR) serves as a coordination point for substrate. Gln163 provides a ligand contact to substrate. Glu164 is a Mg(2+) binding site. Residues Lys195, Thr225, 272–274 (GIR), and 293–294 (AR) each bind FMN.

It belongs to the IPP isomerase type 2 family. Homooctamer. Dimer of tetramers. The cofactor is FMN. NADPH serves as cofactor. Mg(2+) is required as a cofactor.

The protein resides in the cytoplasm. It carries out the reaction isopentenyl diphosphate = dimethylallyl diphosphate. In terms of biological role, involved in the biosynthesis of isoprenoids. Catalyzes the 1,3-allylic rearrangement of the homoallylic substrate isopentenyl (IPP) to its allylic isomer, dimethylallyl diphosphate (DMAPP). The chain is Isopentenyl-diphosphate delta-isomerase from Mycolicibacterium vanbaalenii (strain DSM 7251 / JCM 13017 / BCRC 16820 / KCTC 9966 / NRRL B-24157 / PYR-1) (Mycobacterium vanbaalenii).